The chain runs to 392 residues: Formate-dependent phosphoribosylglycinamide formyltransferase (392 aa).

N(1)-(5-phospho-beta-D-ribosyl)glycinamide-binding positions include 22 to 23 (EL) and E82. ATP-binding positions include R114, K155, 160–165 (SSGKGQ), 195–198 (EGEV), and E203. In terms of domain architecture, ATP-grasp spans 119 to 308 (RLAAETLALP…EFALHVRAFL (190 aa)). 2 residues coordinate Mg(2+): E267 and E279. Residues D286, K355, and 362–363 (RR) each bind N(1)-(5-phospho-beta-D-ribosyl)glycinamide.

It belongs to the PurK/PurT family. As to quaternary structure, homodimer.

The catalysed reaction is N(1)-(5-phospho-beta-D-ribosyl)glycinamide + formate + ATP = N(2)-formyl-N(1)-(5-phospho-beta-D-ribosyl)glycinamide + ADP + phosphate + H(+). It functions in the pathway purine metabolism; IMP biosynthesis via de novo pathway; N(2)-formyl-N(1)-(5-phospho-D-ribosyl)glycinamide from N(1)-(5-phospho-D-ribosyl)glycinamide (formate route): step 1/1. Its function is as follows. Involved in the de novo purine biosynthesis. Catalyzes the transfer of formate to 5-phospho-ribosyl-glycinamide (GAR), producing 5-phospho-ribosyl-N-formylglycinamide (FGAR). Formate is provided by PurU via hydrolysis of 10-formyl-tetrahydrofolate. The protein is Formate-dependent phosphoribosylglycinamide formyltransferase of Edwardsiella ictaluri (strain 93-146).